The chain runs to 89 residues: Small ribosomal subunit protein bS20 (89 aa).

The protein belongs to the bacterial ribosomal protein bS20 family.

Binds directly to 16S ribosomal RNA. This chain is Small ribosomal subunit protein bS20, found in Syntrophus aciditrophicus (strain SB).